Here is a 159-residue protein sequence, read N- to C-terminus: Disease resistance response protein Pi176 (159 aa).

Belongs to the BetVI family.

The polypeptide is Disease resistance response protein Pi176 (Pisum sativum (Garden pea)).